We begin with the raw amino-acid sequence, 559 residues long: NAD-dependent malic enzyme 2 (559 aa).

The active-site Proton donor is Y98. R151 is a binding site for NAD(+). K169 functions as the Proton acceptor in the catalytic mechanism. Positions 240, 241, and 264 each coordinate a divalent metal cation. Positions 264 and 413 each coordinate NAD(+).

It belongs to the malic enzymes family. In terms of assembly, homotetramer. It depends on Mg(2+) as a cofactor. Requires Mn(2+) as cofactor.

It carries out the reaction (S)-malate + NAD(+) = pyruvate + CO2 + NADH. The catalysed reaction is oxaloacetate + H(+) = pyruvate + CO2. The sequence is that of NAD-dependent malic enzyme 2 from Vibrio vulnificus (strain YJ016).